Here is a 391-residue protein sequence, read N- to C-terminus: Cdc42 effector protein 1 (391 aa).

Phosphoserine is present on residues Ser-19 and Ser-27. Phosphothreonine is present on Thr-34. Residues 38 to 52 form the CRIB domain; the sequence is ISHPLGDFRHTMHVG. Ser-39 carries the post-translational modification Phosphoserine. Arg-53 carries the omega-N-methylarginine modification. Ser-65, Ser-73, Ser-77, Ser-101, Ser-113, Ser-121, and Ser-139 each carry phosphoserine. Residues 163 to 189 form a disordered region; it reads ISRLPRSEKPHDRDRDGSFPSEPGLRR. A compositionally biased stretch (basic and acidic residues) spans 167–179; it reads PRSEKPHDRDRDG. Residues Ser-180, Ser-190, Ser-192, and Ser-195 each carry the phosphoserine modification. A run of 8 repeats spans residues 220–226, 227–233, 234–240, 241–247, 248–254, 255–261, 262–268, and 269–275. An 8 X 7 AA tandem repeats of [PT]-[AT]-A-[ENT]-[PT]-[PTS]-[AG] region spans residues 220-275; it reads PAAETPAPAANPPAPTANPTGPAANPPATTANPPAPAANPSAPAATPTGPAANPPA. Residues 221-338 form a disordered region; that stretch reads AAETPAPAAN…HHYPEMDARQ (118 aa). Positions 236-270 are enriched in low complexity; it reads ANPTGPAANPPATTANPPAPAANPSAPAATPTGPA. At Ser-303 the chain carries Phosphoserine. Positions 327-338 are enriched in basic and acidic residues; the sequence is GGHHYPEMDARQ. Ser-350 and Ser-353 each carry phosphoserine. The interval 354-391 is disordered; sequence LDEEWRAPQAGSRTPVPSTVQANTFEFADAEEDDEVKV. The segment covering 364 to 377 has biased composition (polar residues); it reads GSRTPVPSTVQANT. Positions 381–391 are enriched in acidic residues; the sequence is ADAEEDDEVKV.

The protein belongs to the BORG/CEP family. Interacts with RHOQ and CDC42, in a GTP-dependent manner. In terms of tissue distribution, endothelial and bone marrow stromal cells.

Its subcellular location is the endomembrane system. It localises to the cytoplasm. The protein localises to the cytoskeleton. Functionally, probably involved in the organization of the actin cytoskeleton. Induced membrane extensions in fibroblasts. This chain is Cdc42 effector protein 1 (CDC42EP1), found in Homo sapiens (Human).